We begin with the raw amino-acid sequence, 311 residues long: Cytosolic Fe-S cluster assembly factor Nubp1 homolog (311 aa).

The interval 1–21 is disordered; it reads MQAPPPEHCPGVESEDAGKGS. Cys9, Cys23, Cys26, and Cys32 together coordinate [4Fe-4S] cluster. 63–70 contacts ATP; sequence GKGGVGKS. [4Fe-4S] cluster contacts are provided by Cys240 and Cys243.

The protein belongs to the Mrp/NBP35 ATP-binding proteins family. NUBP1/NBP35 subfamily. Heterotetramer of 2 Nubp1 and 2 Nubp2 chains. Requires [4Fe-4S] cluster as cofactor.

It is found in the cytoplasm. Functionally, component of the cytosolic iron-sulfur (Fe/S) protein assembly (CIA) machinery. Required for maturation of extramitochondrial Fe-S proteins. The Nubp1-Nubp2 heterotetramer forms a Fe-S scaffold complex, mediating the de novo assembly of an Fe-S cluster and its transfer to target apoproteins. This chain is Cytosolic Fe-S cluster assembly factor Nubp1 homolog, found in Drosophila sechellia (Fruit fly).